Here is a 325-residue protein sequence, read N- to C-terminus: Lipoyl synthase (325 aa).

Positions 71, 76, 82, 97, 101, 104, and 311 each coordinate [4Fe-4S] cluster. Positions 83–300 (FSGGTATFMI…ERQALAMGFT (218 aa)) constitute a Radical SAM core domain.

This sequence belongs to the radical SAM superfamily. Lipoyl synthase family. Requires [4Fe-4S] cluster as cofactor.

The protein localises to the cytoplasm. It catalyses the reaction [[Fe-S] cluster scaffold protein carrying a second [4Fe-4S](2+) cluster] + N(6)-octanoyl-L-lysyl-[protein] + 2 oxidized [2Fe-2S]-[ferredoxin] + 2 S-adenosyl-L-methionine + 4 H(+) = [[Fe-S] cluster scaffold protein] + N(6)-[(R)-dihydrolipoyl]-L-lysyl-[protein] + 4 Fe(3+) + 2 hydrogen sulfide + 2 5'-deoxyadenosine + 2 L-methionine + 2 reduced [2Fe-2S]-[ferredoxin]. Its pathway is protein modification; protein lipoylation via endogenous pathway; protein N(6)-(lipoyl)lysine from octanoyl-[acyl-carrier-protein]: step 2/2. In terms of biological role, catalyzes the radical-mediated insertion of two sulfur atoms into the C-6 and C-8 positions of the octanoyl moiety bound to the lipoyl domains of lipoate-dependent enzymes, thereby converting the octanoylated domains into lipoylated derivatives. The chain is Lipoyl synthase from Methylobacillus flagellatus (strain ATCC 51484 / DSM 6875 / VKM B-1610 / KT).